A 465-amino-acid polypeptide reads, in one-letter code: Glycine--tRNA ligase (465 aa).

Substrate-binding residues include R98 and E174. Residues 206–208 (RNE), 216–221 (FRTREF), 290–291 (EL), and 334–337 (GADR) each bind ATP. 221 to 225 (FEQME) is a binding site for substrate. Substrate is bound at residue 330–334 (EPSLG).

Belongs to the class-II aminoacyl-tRNA synthetase family. As to quaternary structure, homodimer.

It localises to the cytoplasm. It catalyses the reaction tRNA(Gly) + glycine + ATP = glycyl-tRNA(Gly) + AMP + diphosphate. In terms of biological role, catalyzes the attachment of glycine to tRNA(Gly). This is Glycine--tRNA ligase from Agathobacter rectalis (strain ATCC 33656 / DSM 3377 / JCM 17463 / KCTC 5835 / VPI 0990) (Eubacterium rectale).